Reading from the N-terminus, the 189-residue chain is Peptidyl-tRNA hydrolase (189 aa).

A tRNA-binding site is contributed by Tyr15. The active-site Proton acceptor is His20. Phe66, Asn68, and Asn114 together coordinate tRNA.

It belongs to the PTH family. Monomer.

The protein localises to the cytoplasm. The enzyme catalyses an N-acyl-L-alpha-aminoacyl-tRNA + H2O = an N-acyl-L-amino acid + a tRNA + H(+). Its function is as follows. Hydrolyzes ribosome-free peptidyl-tRNAs (with 1 or more amino acids incorporated), which drop off the ribosome during protein synthesis, or as a result of ribosome stalling. In terms of biological role, catalyzes the release of premature peptidyl moieties from peptidyl-tRNA molecules trapped in stalled 50S ribosomal subunits, and thus maintains levels of free tRNAs and 50S ribosomes. This Streptococcus gordonii (strain Challis / ATCC 35105 / BCRC 15272 / CH1 / DL1 / V288) protein is Peptidyl-tRNA hydrolase.